The primary structure comprises 556 residues: Glutamine--tRNA ligase (556 aa).

The short motif at 34–44 (PEPNGYLHIGH) is the 'HIGH' region element. Residues 35–37 (EPN) and 41–47 (HIGHAKS) each bind ATP. The L-glutamine site is built by D67 and Y212. ATP is bound by residues T231, 261 to 262 (RL), and 269 to 271 (MSK). The short motif at 268 to 272 (VMSKR) is the 'KMSKS' region element.

This sequence belongs to the class-I aminoacyl-tRNA synthetase family. As to quaternary structure, monomer.

It localises to the cytoplasm. The catalysed reaction is tRNA(Gln) + L-glutamine + ATP = L-glutaminyl-tRNA(Gln) + AMP + diphosphate. This is Glutamine--tRNA ligase from Vibrio parahaemolyticus serotype O3:K6 (strain RIMD 2210633).